The following is a 66-amino-acid chain: Large ribosomal subunit protein bL35 (66 aa).

Over residues methionine 1–histidine 26 the composition is skewed to basic residues. Positions methionine 1–arginine 45 are disordered.

It belongs to the bacterial ribosomal protein bL35 family.

The polypeptide is Large ribosomal subunit protein bL35 (Bacillus velezensis (strain DSM 23117 / BGSC 10A6 / LMG 26770 / FZB42) (Bacillus amyloliquefaciens subsp. plantarum)).